The following is a 200-amino-acid chain: Dephospho-CoA kinase (200 aa).

Residues 4–200 (VIGLTGGIAS…AILKKWNIID (197 aa)) form the DPCK domain. 12–17 (ASGKST) is a binding site for ATP.

It belongs to the CoaE family.

It is found in the cytoplasm. It catalyses the reaction 3'-dephospho-CoA + ATP = ADP + CoA + H(+). It functions in the pathway cofactor biosynthesis; coenzyme A biosynthesis; CoA from (R)-pantothenate: step 5/5. Its function is as follows. Catalyzes the phosphorylation of the 3'-hydroxyl group of dephosphocoenzyme A to form coenzyme A. This chain is Dephospho-CoA kinase, found in Bacillus cereus (strain ZK / E33L).